The primary structure comprises 518 residues: F-box protein At1g47056 (518 aa).

The F-box domain maps to 37–82 (PDYTSSLPDECLALVFQFLNSGNRKRCALVCRRWMIVEGQNRYRLS).

In Arabidopsis thaliana (Mouse-ear cress), this protein is F-box protein At1g47056.